The sequence spans 98 residues: Feather keratin (98 aa).

A1 is subject to N-acetylalanine.

Belongs to the avian keratin family. In terms of assembly, the avian keratins (F-ker, S-ker, C-ker and B-ker) are a complex mixture of very similar polypeptides.

The protein is Feather keratin of Chroicocephalus novaehollandiae (Silver gull).